The primary structure comprises 368 residues: MTNSHSADFKQQRIRVASQSSYEVVIDRGIDFATEEILKAAGATANYLIIHQPALADRAAELSKRLSAAGYAAHTHQIDDAESAKTAQSAAECWDVCAQVGLTRADTIIGLGGGAATDLAGFIAATWMRGIKVVHYPTTLLAMVDAAVGGKTGINTPAGKNLVGSFHEPSAVIVDLEVLETLPEAEMIAGSAEIVKAGFIADTEILGIYEADPQAALDPHGSLPELIARAIQVKADVVAVDLKESSLREILNYGHTYGHAVEHYEDYRWRHGQAVAVGMIFEAELAKAAGLLSEADVRRHRDILNSVGLATSYDGAELDELLAAMGRDKKNKGGKIRFVVLEQIGKPTRLEGPSEELLRAAYAASVGA.

NAD(+)-binding positions include 80–85 (DAESAK), 114–118 (GAATD), 138–139 (TT), K151, and K160. E193, H255, and H271 together coordinate Zn(2+).

The protein belongs to the sugar phosphate cyclases superfamily. Dehydroquinate synthase family. It depends on Co(2+) as a cofactor. Zn(2+) is required as a cofactor. The cofactor is NAD(+).

It localises to the cytoplasm. It carries out the reaction 7-phospho-2-dehydro-3-deoxy-D-arabino-heptonate = 3-dehydroquinate + phosphate. Its pathway is metabolic intermediate biosynthesis; chorismate biosynthesis; chorismate from D-erythrose 4-phosphate and phosphoenolpyruvate: step 2/7. In terms of biological role, catalyzes the conversion of 3-deoxy-D-arabino-heptulosonate 7-phosphate (DAHP) to dehydroquinate (DHQ). The sequence is that of 3-dehydroquinate synthase from Corynebacterium jeikeium (strain K411).